The following is a 548-amino-acid chain: MKNINPTKTKSWNLLKKHFNNMKKVNIKDLFEKDKNRFSSFSICFDDIILIDYSKNIITKETIKKLIQLAKECDLNNAILSMFCGKKINYTENRAVLHTALRNHKNISIEIDGINIIPKIKKVLNKMKNFCSDLIDGNWKGFTGERITHIVNIGIGGSDLGPYMVTEALKFYKNHLNVYFVSNIDGTHITEILKYLSPKNTLFLIASKTFTTQETITNAYSAKDWFLKYAKDKKYLSRHFIALSSNIDEVKKFGINTENIFELWNWVGGRYSLWSCMGLSIALSIGFNNFEKLLRGAYAMDQHFLKQPFEKNIPIILGLISIWYNNFFNFETESILVYDQYMHLFSSYFQQVNMESNGKSIDRNGNLVNYQTGSILWGGYGTNSQHAFYQLMHQGTKIVPCDFIVPIISHNPVSDHHQKLLANFFAQTKALAFGKKSENNHIKLYKYDSNKIKILPFKILPGNRPTNSILIKEINPYNLGSLIAMYEHKIFTQGVVLNINSFDQWGVELGKQLSKKLFSILRKEKILNTSSYDSSTNGLINFYKLWKK.

Residue Glu355 is the Proton donor of the active site. Catalysis depends on residues His386 and Lys511.

This sequence belongs to the GPI family.

It localises to the cytoplasm. The enzyme catalyses alpha-D-glucose 6-phosphate = beta-D-fructose 6-phosphate. It participates in carbohydrate biosynthesis; gluconeogenesis. It functions in the pathway carbohydrate degradation; glycolysis; D-glyceraldehyde 3-phosphate and glycerone phosphate from D-glucose: step 2/4. Functionally, catalyzes the reversible isomerization of glucose-6-phosphate to fructose-6-phosphate. This chain is Glucose-6-phosphate isomerase, found in Wigglesworthia glossinidia brevipalpis.